Consider the following 724-residue polypeptide: Phenylalanine ammonia-lyase (724 aa).

Catalysis depends on Y99, which acts as the Proton donor/acceptor. Positions 204–206 (ASG) form a cross-link, 5-imidazolinone (Ala-Gly). S205 is modified (2,3-didehydroalanine (Ser)). (E)-cinnamate-binding residues include N265, Q355, R361, N391, K462, E490, and N493.

It belongs to the PAL/histidase family. Homotetramer. In terms of processing, contains an active site 4-methylidene-imidazol-5-one (MIO), which is formed autocatalytically by cyclization and dehydration of residues Ala-Ser-Gly.

It localises to the cytoplasm. It carries out the reaction L-phenylalanine = (E)-cinnamate + NH4(+). It functions in the pathway phenylpropanoid metabolism; trans-cinnamate biosynthesis; trans-cinnamate from L-phenylalanine: step 1/1. Functionally, catalyzes the non-oxidative deamination of L-phenylalanine to form trans-cinnamic acid and a free ammonium ion. Facilitates the commitment step in phenylpropanoid pathways that produce secondary metabolites such as lignins, coumarins and flavonoids. In Flammulina velutipes (Agaricus velutipes), this protein is Phenylalanine ammonia-lyase.